The chain runs to 322 residues: Secreted effector protein SseI (322 aa).

In terms of assembly, interacts with host IQGAP1 and host TRIP6 (thyroid receptor-interacting protein 6).

The protein localises to the secreted. The protein resides in the host cytoplasm. Effector proteins function to alter host cell physiology and promote bacterial survival in host tissues. This protein is required to maintain a long-term chronic systemic infection in mice. It inhibits normal cell migration of primary macrophages and dendritic cells, by a mechanism that involves interaction with the host factor IQGAP1, an important regulator of the cytoskeleton and cell migration. Also accelerates the systemic spread of infection from the gastrointestinal tract to the bloodstream, probably by interacting with host TRIP6. In Salmonella typhimurium (strain LT2 / SGSC1412 / ATCC 700720), this protein is Secreted effector protein SseI (sseI).